The following is a 753-amino-acid chain: CCR4-NOT transcription complex subunit 3 (753 aa).

Positions 240–534 (ATSPPSHSHM…PPQFSTAPEI (295 aa)) are disordered. Over residues 257–268 (SSSTPTSTTSSS) the composition is skewed to low complexity. A compositionally biased stretch (basic and acidic residues) spans 284 to 293 (DDKKRGRSTD). A Phosphothreonine modification is found at Thr-292. The span at 294-315 (SEVSQSPAKNGSKPVHSNQHPQ) shows a compositional bias: polar residues. At Ser-299 the chain carries Phosphoserine. A compositionally biased stretch (pro residues) spans 317–330 (PAVPPTYPSGPPPA). Low complexity predominate over residues 350–376 (PSALGPKASPAPSHNSGTPAPYAQAVA). Residues 396 to 408 (SGGGGGGSGGGGS) are compositionally biased toward gly residues. A compositionally biased stretch (polar residues) spans 424 to 433 (NGATSYSSVV). The segment covering 441–457 (ALSSSGGNNASSQALGP) has biased composition (low complexity). The span at 458 to 467 (PSGPHNPPPS) shows a compositional bias: pro residues. Residues 479-491 (GAGGVAPGSGNNS) show a composition bias toward gly residues. The residue at position 542 (Ser-542) is a Phosphoserine. The interval 661-753 (EFYQRLSTET…YRYLEDRDLQ (93 aa)) is repressor domain.

The protein belongs to the CNOT2/3/5 family. As to quaternary structure, component of the CCR4-NOT complex; distinct complexes seem to exist that differ in the participation of probably mutually exclusive catalytic subunits. In the complex interacts directly with CNOT2. Interacts with TIP120B and NANOS2. Interacts with EBF1. Interacts in an RNA-independent manner with BICC1 (via KH domains). Ubiquitous. Highly expressed in brain, heart, thymus, spleen, kidney, liver, small intestine, lung and peripheral blood leukocytes.

It localises to the cytoplasm. The protein localises to the nucleus. Its subcellular location is the P-body. Component of the CCR4-NOT complex which is one of the major cellular mRNA deadenylases and is linked to various cellular processes including bulk mRNA degradation, miRNA-mediated repression, translational repression during translational initiation and general transcription regulation. Additional complex functions may be a consequence of its influence on mRNA expression. May be involved in metabolic regulation; may be involved in recruitment of the CCR4-NOT complex to deadenylation target mRNAs involved in energy metabolism. Involved in mitotic progression and regulation of the spindle assembly checkpoint by regulating the stability of MAD1L1 mRNA. Can repress transcription and may link the CCR4-NOT complex to transcriptional regulation; the repressive function may involve histone deacetylases. Involved in the maintenance of embryonic stem (ES) cell identity. The sequence is that of CCR4-NOT transcription complex subunit 3 from Homo sapiens (Human).